We begin with the raw amino-acid sequence, 206 residues long: Ras-related protein ralB-B (206 aa).

Position 21 to 28 (21 to 28) interacts with GTP; sequence GSGGVGKS. The Effector region signature appears at 43 to 51; the sequence is YEPTKADSY. Residues 68–72 and 128–131 each bind GTP; these read DTAGQ and NKSD. A compositionally biased stretch (basic and acidic residues) spans 180 to 189; the sequence is KMSENKDKNG. The disordered stretch occupies residues 180–206; the sequence is KMSENKDKNGKKSGKSKKGFKQRCCLL. Basic residues predominate over residues 190–200; it reads KKSGKSKKGFK. A Cysteine methyl ester modification is found at Cys-203. Cys-203 carries the S-geranylgeranyl cysteine lipid modification. A propeptide spans 204–206 (removed in mature form); sequence CLL.

Belongs to the small GTPase superfamily. Ras family. In terms of assembly, interacts with ralbp1 and rap1gds1.

The protein localises to the cell membrane. Its subcellular location is the midbody. The catalysed reaction is GTP + H2O = GDP + phosphate + H(+). In terms of biological role, multifunctional GTPase involved in a variety of cellular processes including gene expression, cell migration, cell proliferation, oncogenic transformation and membrane trafficking. Accomplishes its multiple functions by interacting with distinct downstream effectors. Acts as a GTP sensor for GTP-dependent exocytosis of dense core vesicles. Required both to stabilize the assembly of the exocyst complex and to localize functional exocyst complexes to the leading edge of migrating cells. Required for suppression of apoptosis. In late stages of cytokinesis, upon completion of the bridge formation between dividing cells, mediates exocyst recruitment to the midbody to drive abscission. Regulates the actin cytoskeleton to play a role in gastrulation or neurulation. During the cleavage stages, the GTP-bound form induces a cortical reaction that affects the localization of pigment granules. Activated by the FGF pathway via ras and ral-GDS, but independently of raf. Directs ralbp1 to the plasma membrane. Involved in ligand-dependent receptor mediated endocytosis of the EGF and insulin receptors. In Xenopus laevis (African clawed frog), this protein is Ras-related protein ralB-B (ralb-b).